The sequence spans 145 residues: D-aminoacyl-tRNA deacylase (145 aa).

A Gly-cisPro motif, important for rejection of L-amino acids motif is present at residues 137-138 (GP).

It belongs to the DTD family. In terms of assembly, homodimer.

It is found in the cytoplasm. It carries out the reaction glycyl-tRNA(Ala) + H2O = tRNA(Ala) + glycine + H(+). It catalyses the reaction a D-aminoacyl-tRNA + H2O = a tRNA + a D-alpha-amino acid + H(+). An aminoacyl-tRNA editing enzyme that deacylates mischarged D-aminoacyl-tRNAs. Also deacylates mischarged glycyl-tRNA(Ala), protecting cells against glycine mischarging by AlaRS. Acts via tRNA-based rather than protein-based catalysis; rejects L-amino acids rather than detecting D-amino acids in the active site. By recycling D-aminoacyl-tRNA to D-amino acids and free tRNA molecules, this enzyme counteracts the toxicity associated with the formation of D-aminoacyl-tRNA entities in vivo and helps enforce protein L-homochirality. This chain is D-aminoacyl-tRNA deacylase, found in Shewanella pealeana (strain ATCC 700345 / ANG-SQ1).